Consider the following 311-residue polypeptide: Tryptophan 2,3-dioxygenase (311 aa).

The interval 1-37 (MQPPGGDAPAGCPFSGARAAQPAQAAHEAPHVPGEAD) is disordered. A compositionally biased stretch (low complexity) spans 17–27 (ARAAQPAQAAH). Substrate-binding positions include 80–84 (FIIQH), tyrosine 142, and arginine 146. Histidine 269 provides a ligand contact to heme. Threonine 283 provides a ligand contact to substrate.

This sequence belongs to the tryptophan 2,3-dioxygenase family. Homotetramer. The cofactor is heme.

The enzyme catalyses L-tryptophan + O2 = N-formyl-L-kynurenine. Its pathway is amino-acid degradation; L-tryptophan degradation via kynurenine pathway; L-kynurenine from L-tryptophan: step 1/2. In terms of biological role, heme-dependent dioxygenase that catalyzes the oxidative cleavage of the L-tryptophan (L-Trp) pyrrole ring and converts L-tryptophan to N-formyl-L-kynurenine. Catalyzes the oxidative cleavage of the indole moiety. The protein is Tryptophan 2,3-dioxygenase of Burkholderia cenocepacia (strain ATCC BAA-245 / DSM 16553 / LMG 16656 / NCTC 13227 / J2315 / CF5610) (Burkholderia cepacia (strain J2315)).